A 1207-amino-acid polypeptide reads, in one-letter code: Ras GTPase-activating protein gap-2 (1207 aa).

Disordered stretches follow at residues Met1–Lys29 and Arg221–Arg316. In terms of domain architecture, PH spans Pro40 to Asn383. Over residues Ser223–Ser236 the composition is skewed to low complexity. Composition is skewed to polar residues over residues Thr237–Tyr247 and Ala286–Tyr297. The 117-residue stretch at Trp374–Tyr490 folds into the C2 domain. Polar residues predominate over residues Ser495–Ile504. Positions Ser495 to Glu516 are disordered. Residues Asn579–Ile789 form the Ras-GAP domain. Disordered stretches follow at residues Gly856–Ser903, Phe923–Ser1013, Ala1086–Arg1107, and Leu1163–Asn1207. Polar residues-rich tracts occupy residues Met862–Gln876 and Thr891–Ser903. Residues Thr939–Ser953 are compositionally biased toward low complexity. Over residues Glu955–Arg972 the composition is skewed to basic and acidic residues. Low complexity predominate over residues Ala985–Ser1013. The segment covering Ser1181 to Asn1207 has biased composition (low complexity).

In terms of tissue distribution, mainly expressed in gonads and vulval cells. Isoform c in expressed in pharyngeal epithelial cells and several rectal/blast cells in the tail region. Isoform f is weakly expressed in four cells symmetrically located in the vulval region. Isoform g is strongly expressed in the pharyngeal muscle cells m6 in addition to several cells in the tail region.

It is found in the cytoplasm. Functionally, GTPase-activating protein, which acts as a negative regulator for the member of the Ras family let-60. Probably decreases the signaling activity of Ras by stimulating its intrinsic GTPase activity, thereby lowering the levels of GTP-bound, active Ras. The different isoforms may play a distinct role in specific tissues. This Caenorhabditis elegans protein is Ras GTPase-activating protein gap-2 (gap-2).